A 90-amino-acid chain; its full sequence is Putative membrane protein insertion efficiency factor (90 aa).

It belongs to the UPF0161 family.

It localises to the cell inner membrane. In terms of biological role, could be involved in insertion of integral membrane proteins into the membrane. This is Putative membrane protein insertion efficiency factor from Bordetella bronchiseptica (strain ATCC BAA-588 / NCTC 13252 / RB50) (Alcaligenes bronchisepticus).